The following is a 419-amino-acid chain: Enolase (419 aa).

Residue Q160 coordinates (2R)-2-phosphoglycerate. Residue E204 is the Proton donor of the active site. The Mg(2+) site is built by D240, E283, and D309. Residues K334, R363, S364, and K385 each contribute to the (2R)-2-phosphoglycerate site. Residue K334 is the Proton acceptor of the active site.

It belongs to the enolase family. The cofactor is Mg(2+).

Its subcellular location is the cytoplasm. The protein localises to the secreted. The protein resides in the cell surface. The catalysed reaction is (2R)-2-phosphoglycerate = phosphoenolpyruvate + H2O. Its pathway is carbohydrate degradation; glycolysis; pyruvate from D-glyceraldehyde 3-phosphate: step 4/5. Its function is as follows. Catalyzes the reversible conversion of 2-phosphoglycerate (2-PG) into phosphoenolpyruvate (PEP). It is essential for the degradation of carbohydrates via glycolysis. The protein is Enolase of Pyrobaculum aerophilum (strain ATCC 51768 / DSM 7523 / JCM 9630 / CIP 104966 / NBRC 100827 / IM2).